A 300-amino-acid chain; its full sequence is Hydroxyquinol 1,2-dioxygenase (300 aa).

Positions 167, 200, 224, and 226 each coordinate Fe cation.

Belongs to the intradiol ring-cleavage dioxygenase family. It depends on Fe(3+) as a cofactor.

It carries out the reaction benzene-1,2,4-triol + O2 = maleylacetate + 2 H(+). It participates in aromatic compound metabolism. It functions in the pathway xenobiotic degradation. In terms of biological role, involved in the degradation of para-nitrophenol (4-NP). Catalyzes the conversion of hydroxyquinol to malelylacetate. This Rhodococcus opacus (Nocardia opaca) protein is Hydroxyquinol 1,2-dioxygenase (npcC).